A 458-amino-acid chain; its full sequence is Probable threonine--tRNA ligase, cytoplasmic (458 aa).

In terms of domain architecture, TGS spans 41-104 (DPIKITLLPD…EGDCSLEIFG (64 aa)).

The protein belongs to the class-II aminoacyl-tRNA synthetase family.

It localises to the cytoplasm. It carries out the reaction tRNA(Thr) + L-threonine + ATP = L-threonyl-tRNA(Thr) + AMP + diphosphate + H(+). The chain is Probable threonine--tRNA ligase, cytoplasmic from Arabidopsis thaliana (Mouse-ear cress).